The sequence spans 147 residues: MALYGNFERSLDPKNRLSLPAKFKTELGSNFYLSVLLDGVVEIRNSEEFENEAHKFKTMNVLDKNARDFARLFFQRTVEVEADKQGRFVLPKHILEKASIQKDVVLVGMGDKVELWSKAKYDSFQDSIDDEKIENIAFKLKESGVEF.

SpoVT-AbrB domains follow at residues Asn6 to Glu48 and Thr77 to Lys120.

The protein belongs to the MraZ family. Forms oligomers.

It localises to the cytoplasm. The protein localises to the nucleoid. This chain is Transcriptional regulator MraZ, found in Mycoplasmopsis pulmonis (strain UAB CTIP) (Mycoplasma pulmonis).